The following is a 283-amino-acid chain: NADPH-dependent 7-cyano-7-deazaguanine reductase (283 aa).

Substrate is bound at residue 90-92 (IES). 92–93 (SK) contacts NADPH. C191 functions as the Thioimide intermediate in the catalytic mechanism. The Proton donor role is filled by D198. 230 to 231 (HE) contacts substrate. 259-260 (RG) contributes to the NADPH binding site.

It belongs to the GTP cyclohydrolase I family. QueF type 2 subfamily. In terms of assembly, homodimer.

It localises to the cytoplasm. The enzyme catalyses 7-aminomethyl-7-carbaguanine + 2 NADP(+) = 7-cyano-7-deazaguanine + 2 NADPH + 3 H(+). Its pathway is tRNA modification; tRNA-queuosine biosynthesis. Its function is as follows. Catalyzes the NADPH-dependent reduction of 7-cyano-7-deazaguanine (preQ0) to 7-aminomethyl-7-deazaguanine (preQ1). This chain is NADPH-dependent 7-cyano-7-deazaguanine reductase, found in Tolumonas auensis (strain DSM 9187 / NBRC 110442 / TA 4).